A 153-amino-acid polypeptide reads, in one-letter code: ATP synthase subunit a (153 aa).

2 helical membrane passes run 43 to 63 (AFHL…LLIF) and 104 to 124 (IAPL…VDLI).

Belongs to the ATPase A chain family. As to quaternary structure, F-type ATPases have 2 components, CF(1) - the catalytic core - and CF(0) - the membrane proton channel. CF(1) has five subunits: alpha(3), beta(3), gamma(1), delta(1), epsilon(1). CF(0) has three main subunits: a(1), b(2) and c(9-12). The alpha and beta chains form an alternating ring which encloses part of the gamma chain. CF(1) is attached to CF(0) by a central stalk formed by the gamma and epsilon chains, while a peripheral stalk is formed by the delta and b chains.

It is found in the cell inner membrane. Key component of the proton channel; it plays a direct role in the translocation of protons across the membrane. The chain is ATP synthase subunit a (atpB) from Pseudomonas putida (Arthrobacter siderocapsulatus).